The sequence spans 156 residues: SsrA-binding protein (156 aa).

The interval 131-156 (YDKRQTLREQQDKREALRVMRERNRG) is disordered.

The protein belongs to the SmpB family.

It localises to the cytoplasm. Functionally, required for rescue of stalled ribosomes mediated by trans-translation. Binds to transfer-messenger RNA (tmRNA), required for stable association of tmRNA with ribosomes. tmRNA and SmpB together mimic tRNA shape, replacing the anticodon stem-loop with SmpB. tmRNA is encoded by the ssrA gene; the 2 termini fold to resemble tRNA(Ala) and it encodes a 'tag peptide', a short internal open reading frame. During trans-translation Ala-aminoacylated tmRNA acts like a tRNA, entering the A-site of stalled ribosomes, displacing the stalled mRNA. The ribosome then switches to translate the ORF on the tmRNA; the nascent peptide is terminated with the 'tag peptide' encoded by the tmRNA and targeted for degradation. The ribosome is freed to recommence translation, which seems to be the essential function of trans-translation. This Arthrobacter sp. (strain FB24) protein is SsrA-binding protein.